The sequence spans 273 residues: NH(3)-dependent NAD(+) synthetase (273 aa).

47 to 54 (GISGGQDS) is a binding site for ATP. Aspartate 53 serves as a coordination point for Mg(2+). Arginine 139 serves as a coordination point for deamido-NAD(+). Position 159 (threonine 159) interacts with ATP. Glutamate 164 provides a ligand contact to Mg(2+). Deamido-NAD(+) is bound by residues lysine 172 and aspartate 179. ATP is bound by residues lysine 188 and threonine 210. 259 to 260 (HK) contacts deamido-NAD(+).

The protein belongs to the NAD synthetase family. In terms of assembly, homodimer.

It carries out the reaction deamido-NAD(+) + NH4(+) + ATP = AMP + diphosphate + NAD(+) + H(+). It functions in the pathway cofactor biosynthesis; NAD(+) biosynthesis; NAD(+) from deamido-NAD(+) (ammonia route): step 1/1. Catalyzes the ATP-dependent amidation of deamido-NAD to form NAD. Uses ammonia as a nitrogen source. The polypeptide is NH(3)-dependent NAD(+) synthetase (Staphylococcus aureus (strain COL)).